The following is a 617-amino-acid chain: Glutamine--fructose-6-phosphate aminotransferase [isomerizing] (617 aa).

Cys2 functions as the Nucleophile; for GATase activity in the catalytic mechanism. The Glutamine amidotransferase type-2 domain maps to 2–222; that stretch reads CGIIGLAFAE…DGEFGWISPE (221 aa). SIS domains lie at 293–432 and 466–607; these read AAGL…EAGR and AASL…PDKP. The For Fru-6P isomerization activity role is filled by Lys612.

As to quaternary structure, homodimer.

It localises to the cytoplasm. The enzyme catalyses D-fructose 6-phosphate + L-glutamine = D-glucosamine 6-phosphate + L-glutamate. Functionally, catalyzes the first step in hexosamine metabolism, converting fructose-6P into glucosamine-6P using glutamine as a nitrogen source. In Aeropyrum pernix (strain ATCC 700893 / DSM 11879 / JCM 9820 / NBRC 100138 / K1), this protein is Glutamine--fructose-6-phosphate aminotransferase [isomerizing].